The chain runs to 203 residues: Cilia- and flagella-associated protein 20 (203 aa).

This sequence belongs to the CFAP20 family.

It is found in the nucleus. Its subcellular location is the cytoplasm. It localises to the cytoskeleton. The protein resides in the microtubule organizing center. The protein localises to the centrosome. It is found in the centriole. Its subcellular location is the cilium basal body. It localises to the cilium axoneme. Cilium- and flagellum-specific protein that plays a role in axonemal structure organization and motility. Microtubule inner protein (MIP) part of the dynein-decorated doublet microtubules (DMTs) in cilia axoneme, which is required for motile cilia beating. Involved in the regulation of the size and morphology of cilia. Required for axonemal microtubules polyglutamylation. The protein is Cilia- and flagella-associated protein 20 of Caenorhabditis elegans.